A 289-amino-acid chain; its full sequence is Ubiquinone biosynthesis O-methyltransferase (289 aa).

Arg-36 provides a ligand contact to S-adenosyl-L-methionine. Residues 50–98 enclose the RPE1 insert domain; it reads RHLSKLTYREELVGNMQHSTAAYALVREDASSRLTHKLPLEAEFEKMSN. S-adenosyl-L-methionine is bound by residues Gly-109, Asp-130, and Leu-172.

It belongs to the methyltransferase superfamily. UbiG/COQ3 family.

The catalysed reaction is a 3-demethylubiquinol + S-adenosyl-L-methionine = a ubiquinol + S-adenosyl-L-homocysteine + H(+). The enzyme catalyses a 3-(all-trans-polyprenyl)benzene-1,2-diol + S-adenosyl-L-methionine = a 2-methoxy-6-(all-trans-polyprenyl)phenol + S-adenosyl-L-homocysteine + H(+). Its pathway is cofactor biosynthesis; ubiquinone biosynthesis. Functionally, O-methyltransferase that catalyzes the 2 O-methylation steps in the ubiquinone biosynthetic pathway. This is Ubiquinone biosynthesis O-methyltransferase from Rickettsia conorii (strain ATCC VR-613 / Malish 7).